Reading from the N-terminus, the 479-residue chain is Ribosomal RNA small subunit methyltransferase F (479 aa).

Residues 125-131 (AAAPGSK), Glu-149, Asp-176, and Asp-194 each bind S-adenosyl-L-methionine. Catalysis depends on Cys-247, which acts as the Nucleophile.

It belongs to the class I-like SAM-binding methyltransferase superfamily. RsmB/NOP family.

The protein localises to the cytoplasm. It carries out the reaction cytidine(1407) in 16S rRNA + S-adenosyl-L-methionine = 5-methylcytidine(1407) in 16S rRNA + S-adenosyl-L-homocysteine + H(+). In terms of biological role, specifically methylates the cytosine at position 1407 (m5C1407) of 16S rRNA. This is Ribosomal RNA small subunit methyltransferase F from Escherichia coli O81 (strain ED1a).